The sequence spans 81 residues: MTTTMKTFVAFVLTVFFIMSSAHCRTTTGGSPGYGIGGRTKTCFTPALCIYRGVHGCDSYCKTKNFDYGYCRQEHCCCVNY.

An N-terminal signal peptide occupies residues 1-24 (MTTTMKTFVAFVLTVFFIMSSAHC). Cystine bridges form between C43-C78, C49-C71, C57-C76, and C61-C77.

The protein belongs to the DEFL family.

The protein resides in the secreted. This Arabidopsis thaliana (Mouse-ear cress) protein is Putative defensin-like protein 102.